Consider the following 413-residue polypeptide: Histidine--tRNA ligase (413 aa).

Belongs to the class-II aminoacyl-tRNA synthetase family. In terms of assembly, homodimer.

The protein resides in the cytoplasm. It catalyses the reaction tRNA(His) + L-histidine + ATP = L-histidyl-tRNA(His) + AMP + diphosphate + H(+). This Geobacter sulfurreducens (strain ATCC 51573 / DSM 12127 / PCA) protein is Histidine--tRNA ligase.